We begin with the raw amino-acid sequence, 746 residues long: 1,4-alpha-glucan branching enzyme GlgB (746 aa).

Asp-418 acts as the Nucleophile in catalysis. The active-site Proton donor is Glu-471.

It belongs to the glycosyl hydrolase 13 family. GlgB subfamily. Monomer.

It carries out the reaction Transfers a segment of a (1-&gt;4)-alpha-D-glucan chain to a primary hydroxy group in a similar glucan chain.. It participates in glycan biosynthesis; glycogen biosynthesis. Functionally, catalyzes the formation of the alpha-1,6-glucosidic linkages in glycogen by scission of a 1,4-alpha-linked oligosaccharide from growing alpha-1,4-glucan chains and the subsequent attachment of the oligosaccharide to the alpha-1,6 position. The polypeptide is 1,4-alpha-glucan branching enzyme GlgB (Nitrosospira multiformis (strain ATCC 25196 / NCIMB 11849 / C 71)).